The following is a 303-amino-acid chain: MTNTTMQPNRLRIALQKKGRLSQDCAILLKQCGVKINWNEQRLIAYAENLPIEILRVRDDDIPGLIFDGVVDLGIIGENVLEEEELGRRAANETVTYKKLRQLDFGDCRLSLAVDRDCHYENVKDLANRRIATSYPHLLKRYMNENGVSFKSCLLNGSVEVAPSAGIAYAICDLVSSGATLEANGLKEVDVIYRSKACLIQRAEPLESTKQALVDKLLTRIQGVQQAAESKYIMLHAPKEKLEKITALLPGVENPTILPLASDTTRVAMHVVSQENLFWETMEQLKEAGASSILVLPIEKMME.

Belongs to the ATP phosphoribosyltransferase family. Long subfamily. Mg(2+) is required as a cofactor.

The protein resides in the cytoplasm. The enzyme catalyses 1-(5-phospho-beta-D-ribosyl)-ATP + diphosphate = 5-phospho-alpha-D-ribose 1-diphosphate + ATP. It participates in amino-acid biosynthesis; L-histidine biosynthesis; L-histidine from 5-phospho-alpha-D-ribose 1-diphosphate: step 1/9. Its activity is regulated as follows. Feedback inhibited by histidine. Catalyzes the condensation of ATP and 5-phosphoribose 1-diphosphate to form N'-(5'-phosphoribosyl)-ATP (PR-ATP). Has a crucial role in the pathway because the rate of histidine biosynthesis seems to be controlled primarily by regulation of HisG enzymatic activity. In Haemophilus influenzae (strain 86-028NP), this protein is ATP phosphoribosyltransferase.